The following is an 81-amino-acid chain: ATP synthase subunit c, chloroplastic (81 aa).

2 helical membrane-spanning segments follow: residues 3–23 (PIIC…GAIG) and 57–77 (LAFM…IIFA).

It belongs to the ATPase C chain family. F-type ATPases have 2 components, F(1) - the catalytic core - and F(0) - the membrane proton channel. F(1) has five subunits: alpha(3), beta(3), gamma(1), delta(1), epsilon(1). F(0) has four main subunits: a(1), b(1), b'(1) and c(10-14). The alpha and beta chains form an alternating ring which encloses part of the gamma chain. F(1) is attached to F(0) by a central stalk formed by the gamma and epsilon chains, while a peripheral stalk is formed by the delta, b and b' chains.

The protein localises to the plastid. The protein resides in the chloroplast thylakoid membrane. Its function is as follows. F(1)F(0) ATP synthase produces ATP from ADP in the presence of a proton or sodium gradient. F-type ATPases consist of two structural domains, F(1) containing the extramembraneous catalytic core and F(0) containing the membrane proton channel, linked together by a central stalk and a peripheral stalk. During catalysis, ATP synthesis in the catalytic domain of F(1) is coupled via a rotary mechanism of the central stalk subunits to proton translocation. Key component of the F(0) channel; it plays a direct role in translocation across the membrane. A homomeric c-ring of between 10-14 subunits forms the central stalk rotor element with the F(1) delta and epsilon subunits. The sequence is that of ATP synthase subunit c, chloroplastic from Euglena gracilis.